A 194-amino-acid polypeptide reads, in one-letter code: Holliday junction branch migration complex subunit RuvA (194 aa).

The interval Met-1–Ala-64 is domain I. The domain II stretch occupies residues Thr-65–Ala-143. A flexible linker region spans residues Ala-144–Ala-147. The tract at residues Ala-147–Lys-194 is domain III.

Belongs to the RuvA family. Homotetramer. Forms an RuvA(8)-RuvB(12)-Holliday junction (HJ) complex. HJ DNA is sandwiched between 2 RuvA tetramers; dsDNA enters through RuvA and exits via RuvB. An RuvB hexamer assembles on each DNA strand where it exits the tetramer. Each RuvB hexamer is contacted by two RuvA subunits (via domain III) on 2 adjacent RuvB subunits; this complex drives branch migration. In the full resolvosome a probable DNA-RuvA(4)-RuvB(12)-RuvC(2) complex forms which resolves the HJ.

It is found in the cytoplasm. Its function is as follows. The RuvA-RuvB-RuvC complex processes Holliday junction (HJ) DNA during genetic recombination and DNA repair, while the RuvA-RuvB complex plays an important role in the rescue of blocked DNA replication forks via replication fork reversal (RFR). RuvA specifically binds to HJ cruciform DNA, conferring on it an open structure. The RuvB hexamer acts as an ATP-dependent pump, pulling dsDNA into and through the RuvAB complex. HJ branch migration allows RuvC to scan DNA until it finds its consensus sequence, where it cleaves and resolves the cruciform DNA. In Neisseria meningitidis serogroup A / serotype 4A (strain DSM 15465 / Z2491), this protein is Holliday junction branch migration complex subunit RuvA.